We begin with the raw amino-acid sequence, 627 residues long: tRNA uridine 5-carboxymethylaminomethyl modification enzyme MnmG (627 aa).

Gly-14–Gly-19 is a binding site for FAD. Gly-275 to Phe-289 provides a ligand contact to NAD(+).

Belongs to the MnmG family. Homodimer. Heterotetramer of two MnmE and two MnmG subunits. It depends on FAD as a cofactor.

It is found in the cytoplasm. Its function is as follows. NAD-binding protein involved in the addition of a carboxymethylaminomethyl (cmnm) group at the wobble position (U34) of certain tRNAs, forming tRNA-cmnm(5)s(2)U34. The sequence is that of tRNA uridine 5-carboxymethylaminomethyl modification enzyme MnmG from Lachnoclostridium phytofermentans (strain ATCC 700394 / DSM 18823 / ISDg) (Clostridium phytofermentans).